Here is a 175-residue protein sequence, read N- to C-terminus: MGTVNVVRVVSLHKLSWYEKFYFYSIGKGLWITLKHFIKAAILRRTVTIEYPEKKRKYSTRFRGMHTMKRDEQGRERCTSCFCCMWICPADAIYIEAGEVVPEIQHLHPEDKYAKKFEIDLLRCIFCGMCEEACPKGAIYLDGPGEMATDSREDLILTKERMMQIVGGPIIGERQ.

4Fe-4S ferredoxin-type domains are found at residues 69–98 (KRDE…IEAG) and 115–144 (KKFE…LDGP). Residues C78, C81, C84, C88, C124, C127, C130, and C134 each contribute to the [4Fe-4S] cluster site.

The protein belongs to the complex I 23 kDa subunit family. As to quaternary structure, NDH-1 is composed of 14 different subunits. Subunits NuoA, H, J, K, L, M, N constitute the membrane sector of the complex. [4Fe-4S] cluster serves as cofactor.

The protein localises to the cell inner membrane. The enzyme catalyses a quinone + NADH + 5 H(+)(in) = a quinol + NAD(+) + 4 H(+)(out). In terms of biological role, NDH-1 shuttles electrons from NADH, via FMN and iron-sulfur (Fe-S) centers, to quinones in the respiratory chain. The immediate electron acceptor for the enzyme in this species is believed to be ubiquinone. Couples the redox reaction to proton translocation (for every two electrons transferred, four hydrogen ions are translocated across the cytoplasmic membrane), and thus conserves the redox energy in a proton gradient. The chain is NADH-quinone oxidoreductase subunit I from Leptospira borgpetersenii serovar Hardjo-bovis (strain JB197).